Consider the following 333-residue polypeptide: Phenylalanine--tRNA ligase alpha subunit (333 aa).

Mg(2+) is bound at residue glutamate 248.

The protein belongs to the class-II aminoacyl-tRNA synthetase family. Phe-tRNA synthetase alpha subunit type 1 subfamily. In terms of assembly, tetramer of two alpha and two beta subunits. The cofactor is Mg(2+).

Its subcellular location is the cytoplasm. It catalyses the reaction tRNA(Phe) + L-phenylalanine + ATP = L-phenylalanyl-tRNA(Phe) + AMP + diphosphate + H(+). This chain is Phenylalanine--tRNA ligase alpha subunit, found in Ureaplasma parvum serovar 3 (strain ATCC 27815 / 27 / NCTC 11736).